A 60-amino-acid chain; its full sequence is Large ribosomal subunit protein bL32 (60 aa).

The segment at 1–23 is disordered; the sequence is MAVPKRKKSKSRRNMHRSHHAIK.

This sequence belongs to the bacterial ribosomal protein bL32 family.

This is Large ribosomal subunit protein bL32 from Wolbachia pipientis subsp. Culex pipiens (strain wPip).